A 324-amino-acid polypeptide reads, in one-letter code: Beta-ketoacyl-[acyl-carrier-protein] synthase III (324 aa).

Catalysis depends on residues Cys113 and His251. The interval 252-256 is ACP-binding; it reads QANKR. Residue Asn281 is part of the active site.

The protein belongs to the thiolase-like superfamily. FabH family. As to quaternary structure, homodimer.

Its subcellular location is the cytoplasm. The enzyme catalyses malonyl-[ACP] + acetyl-CoA + H(+) = 3-oxobutanoyl-[ACP] + CO2 + CoA. Its pathway is lipid metabolism; fatty acid biosynthesis. In terms of biological role, catalyzes the condensation reaction of fatty acid synthesis by the addition to an acyl acceptor of two carbons from malonyl-ACP. Catalyzes the first condensation reaction which initiates fatty acid synthesis and may therefore play a role in governing the total rate of fatty acid production. Possesses both acetoacetyl-ACP synthase and acetyl transacylase activities. Its substrate specificity determines the biosynthesis of branched-chain and/or straight-chain of fatty acids. This is Beta-ketoacyl-[acyl-carrier-protein] synthase III from Bartonella henselae (strain ATCC 49882 / DSM 28221 / CCUG 30454 / Houston 1) (Rochalimaea henselae).